The following is a 444-amino-acid chain: Deoxyguanosinetriphosphate triphosphohydrolase-like protein (444 aa).

The tract at residues 1–26 (MIASPWHERRLNEDKKRRNDHRSPFQ) is disordered. In terms of domain architecture, HD spans 59–250 (RLTHSLEVSQ…MELADDIAYA (192 aa)).

It belongs to the dGTPase family. Type 2 subfamily.

The protein is Deoxyguanosinetriphosphate triphosphohydrolase-like protein of Shewanella woodyi (strain ATCC 51908 / MS32).